The primary structure comprises 30 residues: MRFLFFLPPSFITSFLYLALYSFPVPYCII.

An N-terminal signal peptide occupies residues 1 to 22; that stretch reads MRFLFFLPPSFITSFLYLALYS.

This is an uncharacterized protein from Schizosaccharomyces pombe (strain 972 / ATCC 24843) (Fission yeast).